The chain runs to 273 residues: Tryptophan synthase alpha chain (273 aa).

Active-site proton acceptor residues include Glu49 and Asp60.

The protein belongs to the TrpA family. In terms of assembly, tetramer of two alpha and two beta chains.

The catalysed reaction is (1S,2R)-1-C-(indol-3-yl)glycerol 3-phosphate + L-serine = D-glyceraldehyde 3-phosphate + L-tryptophan + H2O. It functions in the pathway amino-acid biosynthesis; L-tryptophan biosynthesis; L-tryptophan from chorismate: step 5/5. The alpha subunit is responsible for the aldol cleavage of indoleglycerol phosphate to indole and glyceraldehyde 3-phosphate. This is Tryptophan synthase alpha chain from Halorhodospira halophila (strain DSM 244 / SL1) (Ectothiorhodospira halophila (strain DSM 244 / SL1)).